Reading from the N-terminus, the 102-residue chain is Small ribosomal subunit protein uS10 (102 aa).

This sequence belongs to the universal ribosomal protein uS10 family. Part of the 30S ribosomal subunit.

Its function is as follows. Involved in the binding of tRNA to the ribosomes. The chain is Small ribosomal subunit protein uS10 from Bacillus anthracis (strain A0248).